We begin with the raw amino-acid sequence, 212 residues long: Uridine kinase (212 aa).

ATP is bound at residue 13–20 (GGSGSGKT).

Belongs to the uridine kinase family.

It localises to the cytoplasm. The catalysed reaction is uridine + ATP = UMP + ADP + H(+). It catalyses the reaction cytidine + ATP = CMP + ADP + H(+). Its pathway is pyrimidine metabolism; CTP biosynthesis via salvage pathway; CTP from cytidine: step 1/3. It functions in the pathway pyrimidine metabolism; UMP biosynthesis via salvage pathway; UMP from uridine: step 1/1. This is Uridine kinase from Bacillus cereus (strain G9842).